The primary structure comprises 1299 residues: DNA-directed RNA polymerase subunit beta' (1299 aa).

Residues Cys60, Cys62, Cys75, and Cys78 each coordinate Zn(2+). Residues 188-209 are disordered; the sequence is GAKSDQKRRAKDGAEKEMGQTR. Residues Asp535, Asp537, and Asp539 each contribute to the Mg(2+) site. The Zn(2+) site is built by Cys882, Cys959, Cys966, and Cys969.

The protein belongs to the RNA polymerase beta' chain family. In terms of assembly, the RNAP catalytic core consists of 2 alpha, 1 beta, 1 beta' and 1 omega subunit. When a sigma factor is associated with the core the holoenzyme is formed, which can initiate transcription. The cofactor is Mg(2+). Zn(2+) is required as a cofactor.

The catalysed reaction is RNA(n) + a ribonucleoside 5'-triphosphate = RNA(n+1) + diphosphate. DNA-dependent RNA polymerase catalyzes the transcription of DNA into RNA using the four ribonucleoside triphosphates as substrates. This is DNA-directed RNA polymerase subunit beta' from Clavibacter michiganensis subsp. michiganensis (strain NCPPB 382).